The chain runs to 206 residues: Small ribosomal subunit protein uS4A (206 aa).

Residues 96-156 (GRLDNVVYRM…EKAKKQSRIG (61 aa)) enclose the S4 RNA-binding domain.

Belongs to the universal ribosomal protein uS4 family. Part of the 30S ribosomal subunit. Contacts protein S5. The interaction surface between S4 and S5 is involved in control of translational fidelity.

In terms of biological role, one of the primary rRNA binding proteins, it binds directly to 16S rRNA where it nucleates assembly of the body of the 30S subunit. Functionally, with S5 and S12 plays an important role in translational accuracy. This Psychromonas ingrahamii (strain DSM 17664 / CCUG 51855 / 37) protein is Small ribosomal subunit protein uS4A.